A 262-amino-acid chain; its full sequence is MLRVSFEQLLEAGVHFGHLKRKWNPAMAPYIFMERKGIHIIDLHKTILKIDEASSAIKQIIRSGRKILFVATKKQAKQVVADKVSFVGMPYVTEHWAGGMLTNFPTIRKAIQKMTVIDRMAHDGTFDLLSKRERLQITRQRAKLEKNLGSIADLKRLPSALFVVDVMKERIAVSEAKRLDIPVFAIVDTNSNPNGIDFIIPANDDATSSIEVILNAICDAIIEGKEERMMDTSINNENKEKTVSVFRKRTKIEGRSKKDSLS.

Belongs to the universal ribosomal protein uS2 family.

This Azobacteroides pseudotrichonymphae genomovar. CFP2 protein is Small ribosomal subunit protein uS2.